A 160-amino-acid chain; its full sequence is Cytochrome b6-f complex subunit 4 (160 aa).

3 consecutive transmembrane segments (helical) span residues 36–56 (LLYTFPVVILGTITCCIGLAL), 95–115 (LLGVLSMASVPLGLIFVPFIE), and 127–147 (PIATTVFLVGTVVTIWLGIGA).

The protein belongs to the cytochrome b family. PetD subfamily. As to quaternary structure, the 4 large subunits of the cytochrome b6-f complex are cytochrome b6, subunit IV (17 kDa polypeptide, petD), cytochrome f and the Rieske protein, while the 4 small subunits are petG, petL, petM and petN. The complex functions as a dimer.

The protein resides in the plastid. It localises to the chloroplast thylakoid membrane. In terms of biological role, component of the cytochrome b6-f complex, which mediates electron transfer between photosystem II (PSII) and photosystem I (PSI), cyclic electron flow around PSI, and state transitions. The sequence is that of Cytochrome b6-f complex subunit 4 from Cyanidioschyzon merolae (strain NIES-3377 / 10D) (Unicellular red alga).